We begin with the raw amino-acid sequence, 344 residues long: 2,3,4,5-tetrahydropyridine-2,6-dicarboxylate N-succinyltransferase (344 aa).

Glutamate 205 serves as a coordination point for Mg(2+). Residue glutamate 221 is the Acyl-anhydride intermediate of the active site. Residues arginine 223, glycine 238, serine 241, alanine 264, 279–280 (EA), 287–289 (GTK), lysine 304, and 317–320 (RRNS) each bind succinyl-CoA.

It belongs to the type 2 tetrahydrodipicolinate N-succinyltransferase family. In terms of assembly, homotrimer. Requires Magnesium ions are not essential for catalysis. as cofactor.

The protein resides in the cytoplasm. The enzyme catalyses (S)-2,3,4,5-tetrahydrodipicolinate + succinyl-CoA + H2O = (S)-2-succinylamino-6-oxoheptanedioate + CoA. The protein operates within amino-acid biosynthesis; L-lysine biosynthesis via DAP pathway; LL-2,6-diaminopimelate from (S)-tetrahydrodipicolinate (succinylase route): step 1/3. Weakly inhibited by D-2-aminopimelate. Its function is as follows. Catalyzes the conversion of the cyclic tetrahydrodipicolinate (THDP) into the acyclic N-succinyl-L-2-amino-6-oxopimelate using succinyl-CoA. Displays succinyl transferase activity with L-2-aminopimelate and succinyl-CoA as substrates. The polypeptide is 2,3,4,5-tetrahydropyridine-2,6-dicarboxylate N-succinyltransferase (Pseudomonas aeruginosa (strain ATCC 15692 / DSM 22644 / CIP 104116 / JCM 14847 / LMG 12228 / 1C / PRS 101 / PAO1)).